Consider the following 312-residue polypeptide: Dihydroorotate dehydrogenase B (NAD(+)), catalytic subunit (312 aa).

FMN contacts are provided by residues Ser23 and 47 to 48 (KA). Substrate contacts are provided by residues Lys47 and 71–75 (NAIGL). 2 residues coordinate FMN: Asn102 and Asn130. A substrate-binding site is contributed by Asn130. Cys133 serves as the catalytic Nucleophile. Lys168 and Ile194 together coordinate FMN. 195-196 (NT) lines the substrate pocket. Residues Gly220, 246-247 (GG), and 268-269 (GT) contribute to the FMN site.

Belongs to the dihydroorotate dehydrogenase family. Type 1 subfamily. Heterotetramer of 2 PyrK and 2 PyrD type B subunits. FMN serves as cofactor.

The protein resides in the cytoplasm. It catalyses the reaction (S)-dihydroorotate + NAD(+) = orotate + NADH + H(+). It functions in the pathway pyrimidine metabolism; UMP biosynthesis via de novo pathway; orotate from (S)-dihydroorotate (NAD(+) route): step 1/1. In terms of biological role, catalyzes the conversion of dihydroorotate to orotate with NAD(+) as electron acceptor. The sequence is that of Dihydroorotate dehydrogenase B (NAD(+)), catalytic subunit (pyrDB) from Enterococcus faecalis (strain ATCC 47077 / OG1RF).